Here is a 191-residue protein sequence, read N- to C-terminus: MACGATLKRPMEFEAALLSPGSPKRRRCAPLPGPTPGLRPPDAEPPPLQMQTPPASLQQPAPPGSERRLPTPEQIFQNIKQEYNRYQRWRHLEVVLSQSEACTSETQPSSSALTAPGSPGAFWMKKDQPTFTLRQVGIICERLLKDYEDKVREEYEQILSTKLAEQYESFVKFTHDQIMRRYGTRPTSYVS.

The tract at residues 17–70 (LLSPGSPKRRRCAPLPGPTPGLRPPDAEPPPLQMQTPPASLQQPAPPGSERRLP) is disordered. Position 22 is a phosphoserine (Ser-22). Positions 23–28 (PKRRRC) match the Nuclear localization signal motif. Over residues 31–48 (LPGPTPGLRPPDAEPPPL) the composition is skewed to pro residues. Residues 49–59 (QMQTPPASLQQ) show a composition bias toward polar residues. Position 71 is a phosphothreonine (Thr-71). Positions 188-191 (SYVS) match the SYVS motif motif.

This sequence belongs to the akirin family. In terms of tissue distribution, expressed in macrophages and satellite cells.

Its subcellular location is the nucleus. Functionally, molecular adapter that acts as a bridge between proteins, and which is involved skeletal muscle development. Functions as a signal transducer for MSTN during skeletal muscle regeneration and myogenesis. May regulate chemotaxis of both macrophages and myoblasts by reorganising actin cytoskeleton, leading to more efficient lamellipodia formation via a PI3 kinase dependent pathway. In contrast to AKIRIN2, not involved in nuclear import of proteasomes. This chain is Akirin-1, found in Mus musculus (Mouse).